Consider the following 162-residue polypeptide: uncharacterized protein (162 aa).

Residues 29 to 50 (CPFCDYTNADAKVVRKHVKSKH) form a C2H2-type zinc finger. The tract at residues 60 to 93 (KLESQKSKNNGKKQTGQKKQGKGKKQPKRVRETC) is disordered. Residues 68–87 (NNGKKQTGQKKQGKGKKQPK) show a composition bias toward basic residues.

The protein to M.jannaschii MJECS06.

This is an uncharacterized protein from Methanocaldococcus jannaschii (strain ATCC 43067 / DSM 2661 / JAL-1 / JCM 10045 / NBRC 100440) (Methanococcus jannaschii).